A 135-amino-acid chain; its full sequence is ATP synthase epsilon chain (135 aa).

It belongs to the ATPase epsilon chain family. In terms of assembly, F-type ATPases have 2 components, CF(1) - the catalytic core - and CF(0) - the membrane proton channel. CF(1) has five subunits: alpha(3), beta(3), gamma(1), delta(1), epsilon(1). CF(0) has three main subunits: a, b and c.

The protein resides in the cell inner membrane. Functionally, produces ATP from ADP in the presence of a proton gradient across the membrane. In Mesorhizobium japonicum (strain LMG 29417 / CECT 9101 / MAFF 303099) (Mesorhizobium loti (strain MAFF 303099)), this protein is ATP synthase epsilon chain.